The primary structure comprises 474 residues: Protein nucleotidyltransferase YdiU (474 aa).

Positions 89, 91, 92, 112, 124, 125, 175, and 182 each coordinate ATP. The active-site Proton acceptor is Asp-256. Mg(2+) is bound by residues Asn-257 and Asp-266. Asp-266 contacts ATP.

The protein belongs to the SELO family. Requires Mg(2+) as cofactor. Mn(2+) serves as cofactor.

It catalyses the reaction L-seryl-[protein] + ATP = 3-O-(5'-adenylyl)-L-seryl-[protein] + diphosphate. The enzyme catalyses L-threonyl-[protein] + ATP = 3-O-(5'-adenylyl)-L-threonyl-[protein] + diphosphate. It carries out the reaction L-tyrosyl-[protein] + ATP = O-(5'-adenylyl)-L-tyrosyl-[protein] + diphosphate. The catalysed reaction is L-histidyl-[protein] + UTP = N(tele)-(5'-uridylyl)-L-histidyl-[protein] + diphosphate. It catalyses the reaction L-seryl-[protein] + UTP = O-(5'-uridylyl)-L-seryl-[protein] + diphosphate. The enzyme catalyses L-tyrosyl-[protein] + UTP = O-(5'-uridylyl)-L-tyrosyl-[protein] + diphosphate. In terms of biological role, nucleotidyltransferase involved in the post-translational modification of proteins. It can catalyze the addition of adenosine monophosphate (AMP) or uridine monophosphate (UMP) to a protein, resulting in modifications known as AMPylation and UMPylation. This chain is Protein nucleotidyltransferase YdiU, found in Corynebacterium glutamicum (strain ATCC 13032 / DSM 20300 / JCM 1318 / BCRC 11384 / CCUG 27702 / LMG 3730 / NBRC 12168 / NCIMB 10025 / NRRL B-2784 / 534).